The sequence spans 293 residues: Phosphatidylserine decarboxylase proenzyme (293 aa).

Residues Asp-88, His-144, and Ser-247 each act as charge relay system; for autoendoproteolytic cleavage activity in the active site. The active-site Schiff-base intermediate with substrate; via pyruvic acid; for decarboxylase activity is the Ser-247. Ser-247 is modified (pyruvic acid (Ser); by autocatalysis).

It belongs to the phosphatidylserine decarboxylase family. PSD-B subfamily. Prokaryotic type I sub-subfamily. As to quaternary structure, heterodimer of a large membrane-associated beta subunit and a small pyruvoyl-containing alpha subunit. Pyruvate is required as a cofactor. Is synthesized initially as an inactive proenzyme. Formation of the active enzyme involves a self-maturation process in which the active site pyruvoyl group is generated from an internal serine residue via an autocatalytic post-translational modification. Two non-identical subunits are generated from the proenzyme in this reaction, and the pyruvate is formed at the N-terminus of the alpha chain, which is derived from the carboxyl end of the proenzyme. The autoendoproteolytic cleavage occurs by a canonical serine protease mechanism, in which the side chain hydroxyl group of the serine supplies its oxygen atom to form the C-terminus of the beta chain, while the remainder of the serine residue undergoes an oxidative deamination to produce ammonia and the pyruvoyl prosthetic group on the alpha chain. During this reaction, the Ser that is part of the protease active site of the proenzyme becomes the pyruvoyl prosthetic group, which constitutes an essential element of the active site of the mature decarboxylase.

The protein resides in the cell membrane. The enzyme catalyses a 1,2-diacyl-sn-glycero-3-phospho-L-serine + H(+) = a 1,2-diacyl-sn-glycero-3-phosphoethanolamine + CO2. It participates in phospholipid metabolism; phosphatidylethanolamine biosynthesis; phosphatidylethanolamine from CDP-diacylglycerol: step 2/2. Functionally, catalyzes the formation of phosphatidylethanolamine (PtdEtn) from phosphatidylserine (PtdSer). The sequence is that of Phosphatidylserine decarboxylase proenzyme from Xylella fastidiosa (strain M23).